A 448-amino-acid chain; its full sequence is Probable tryptophanase (448 aa).

An N6-(pyridoxal phosphate)lysine modification is found at lysine 253.

The protein belongs to the beta-eliminating lyase family. Pyridoxal 5'-phosphate is required as a cofactor.

The catalysed reaction is L-tryptophan + H2O = indole + pyruvate + NH4(+). The protein operates within amino-acid degradation; L-tryptophan degradation via pyruvate pathway; indole and pyruvate from L-tryptophan: step 1/1. This Halobacterium salinarum (strain ATCC 29341 / DSM 671 / R1) protein is Probable tryptophanase.